The following is a 143-amino-acid chain: Small ribosomal subunit protein uS12 (143 aa).

Position 62 is a hydroxyproline (Pro-62).

Belongs to the universal ribosomal protein uS12 family. In terms of assembly, component of the 40S small ribosomal subunit.

It is found in the cytoplasm. It localises to the cytosol. The protein resides in the rough endoplasmic reticulum. This chain is Small ribosomal subunit protein uS12 (RPS23), found in Ciona intestinalis (Transparent sea squirt).